We begin with the raw amino-acid sequence, 233 residues long: Cysteine-rich venom protein (233 aa).

A signal peptide spans 1-12 (PILAAVLQQSSG). The SCP domain maps to 31–159 (VDLHNSLRRS…PYSYFFVCQY (129 aa)). Intrachain disulfides connect Cys-68–Cys-146, Cys-85–Cys-160, Cys-141–Cys-157, Cys-179–Cys-186, Cys-182–Cys-191, Cys-195–Cys-228, Cys-204–Cys-222, and Cys-213–Cys-226. The ShKT domain occupies 195-228 (CTRENKFTNCNTMVQQSSCQDNYMKTNCPASCFC).

It belongs to the CRISP family. Expressed by the venom gland.

It is found in the secreted. In terms of biological role, blocks contraction of smooth muscle elicited by high potassium-induced depolarization, but does not block caffeine-stimulated contraction. May target voltage-gated calcium channels on smooth muscle. In Trimeresurus stejnegeri (Chinese green tree viper), this protein is Cysteine-rich venom protein.